We begin with the raw amino-acid sequence, 467 residues long: UBX domain-containing protein 7 (467 aa).

At Ala2 the chain carries N-acetylalanine. The region spanning 2 to 54 is the UBA domain; the sequence is AAHGGSAASSALKGLIQQFTAITGASESVGKHMLEACNNNLEMAVTMFLDGGG. The segment at 57–77 is disordered; sequence EEPSTSSASVSTVRPHTEEEV. Polar residues predominate over residues 59 to 70; the sequence is PSTSSASVSTVR. Glycyl lysine isopeptide (Lys-Gly) (interchain with G-Cter in SUMO2) cross-links involve residues Lys84 and Lys112. The segment at 240-260 is disordered; it reads GQLDGLSSSPPKKCARSESLI. A phosphoserine mark is found at Ser256, Ser258, Ser263, and Ser266. The ubiquitin-interacting motif (UIM) repeat unit spans residues 263–282; it reads SEDSQLEAAIRASLQETHFD. The tract at residues 281-364 is disordered; the sequence is FDSAQAKQDS…TATNHQGLPS (84 aa). A compositionally biased stretch (basic and acidic residues) spans 330 to 344; the sequence is HKDLGHRKEENRRPL. Ser373 bears the Phosphoserine mark. Residues 386 to 463 enclose the UBX domain; sequence VNGPKAQLML…GLCPQETVFV (78 aa).

Interacts with neddylated CUL2, ubiquitinated HIF1A, and VCP/p97.

It localises to the nucleus. Its function is as follows. Ubiquitin-binding adapter that links a subset of NEDD8-associated cullin ring ligases (CRLs) to the segregase VCP/p97, to regulate turnover of their ubiquitination substrates. This is UBX domain-containing protein 7 (Ubxn7) from Mus musculus (Mouse).